A 698-amino-acid polypeptide reads, in one-letter code: Zinc finger CCCH domain-containing protein 7 (698 aa).

Positions 1–11 are enriched in pro residues; it reads MEEPSPVPPAA. 4 disordered regions span residues 1-23, 56-95, 109-137, and 272-300; these read MEEP…PPTT, HAAR…GGDR, APHE…PQGT, and GSLD…SGNS. Composition is skewed to low complexity over residues 12 to 21 and 65 to 74; these read APASLAAAPP and EPAAAAAIPP. Over residues 281 to 300 the composition is skewed to acidic residues; that stretch reads EEGEIEGDTQNLDADDSGNS. 3 consecutive C3H1-type zinc fingers follow at residues 429 to 456, 458 to 485, and 486 to 511; these read PKVV…HDTT, LTKS…HELS, and KYPC…HVIP. 2 disordered regions span residues 512-553 and 607-682; these read TAEG…GEPA and TEKH…QHEV. 2 stretches are compositionally biased toward polar residues: residues 535 to 548 and 665 to 680; these read CQEQ…STVY and SLPT…STQH.

In Oryza sativa subsp. japonica (Rice), this protein is Zinc finger CCCH domain-containing protein 7.